Reading from the N-terminus, the 506-residue chain is Protein MGF 505-4R (506 aa).

Belongs to the asfivirus MGF 505 family.

Its function is as follows. Plays a role in virus cell tropism, and may be required for efficient virus replication in macrophages. In Ornithodoros (relapsing fever ticks), this protein is Protein MGF 505-4R.